Here is a 253-residue protein sequence, read N- to C-terminus: Tryptophan synthase alpha chain (253 aa).

Residues Glu47 and Asp58 each act as proton acceptor in the active site.

It belongs to the TrpA family. As to quaternary structure, tetramer of two alpha and two beta chains.

It catalyses the reaction (1S,2R)-1-C-(indol-3-yl)glycerol 3-phosphate + L-serine = D-glyceraldehyde 3-phosphate + L-tryptophan + H2O. It participates in amino-acid biosynthesis; L-tryptophan biosynthesis; L-tryptophan from chorismate: step 5/5. Functionally, the alpha subunit is responsible for the aldol cleavage of indoleglycerol phosphate to indole and glyceraldehyde 3-phosphate. The chain is Tryptophan synthase alpha chain from Lactococcus lactis subsp. cremoris (strain SK11).